We begin with the raw amino-acid sequence, 322 residues long: Fructose-1,6-bisphosphatase class 1 3 (322 aa).

Glu84, Asp103, Leu105, and Asp106 together coordinate Mg(2+). Substrate contacts are provided by residues 106 to 109, Asn198, and Lys262; that span reads DGSS. Glu268 provides a ligand contact to Mg(2+).

It belongs to the FBPase class 1 family. Homotetramer. Requires Mg(2+) as cofactor.

The protein resides in the cytoplasm. It carries out the reaction beta-D-fructose 1,6-bisphosphate + H2O = beta-D-fructose 6-phosphate + phosphate. The protein operates within carbohydrate biosynthesis; gluconeogenesis. In Pseudoalteromonas translucida (strain TAC 125), this protein is Fructose-1,6-bisphosphatase class 1 3.